Consider the following 304-residue polypeptide: Acetyl-coenzyme A carboxylase carboxyl transferase subunit beta (304 aa).

In terms of domain architecture, CoA carboxyltransferase N-terminal spans 25 to 294 (LWIKCPETGE…KAIKRDTATE (270 aa)).

It belongs to the AccD/PCCB family. As to quaternary structure, acetyl-CoA carboxylase is a heterohexamer composed of biotin carboxyl carrier protein (AccB), biotin carboxylase (AccC) and two subunits each of ACCase subunit alpha (AccA) and ACCase subunit beta (AccD).

Its subcellular location is the cytoplasm. It carries out the reaction N(6)-carboxybiotinyl-L-lysyl-[protein] + acetyl-CoA = N(6)-biotinyl-L-lysyl-[protein] + malonyl-CoA. Its pathway is lipid metabolism; malonyl-CoA biosynthesis; malonyl-CoA from acetyl-CoA: step 1/1. Functionally, component of the acetyl coenzyme A carboxylase (ACC) complex. Biotin carboxylase (BC) catalyzes the carboxylation of biotin on its carrier protein (BCCP) and then the CO(2) group is transferred by the transcarboxylase to acetyl-CoA to form malonyl-CoA. The sequence is that of Acetyl-coenzyme A carboxylase carboxyl transferase subunit beta from Sinorhizobium medicae (strain WSM419) (Ensifer medicae).